Reading from the N-terminus, the 553-residue chain is Cytokine-like nuclear factor N-PAC (553 aa).

In terms of domain architecture, PWWP spans 8 to 66; the sequence is LGDLVWGKLGRYPPWPGKIVNPPKDLKKPRGKKCFFVKFFGTEDHAWIKVEQLKPYHAH. Composition is skewed to basic and acidic residues over residues 92–145 and 162–182; these read RAKG…EGKK and RAQE…KDLT. Residues 92-188 form a disordered region; sequence RAKGKDQTSS…KDLTIPESST (97 aa). Phosphoserine is present on S130. Residue K135 forms a Glycyl lysine isopeptide (Lys-Gly) (interchain with G-Cter in SUMO2) linkage. Residue S167 is modified to Phosphoserine. The segment at residues 168–180 is a DNA-binding region (a.T hook); the sequence is PRKRGRPPKDEKD. Residues K176, K179, K201, and K211 each participate in a glycyl lysine isopeptide (Lys-Gly) (interchain with G-Cter in SUMO2) cross-link. Residues 214-217 are interaction with histone H3; the sequence is DPHF. Residues 216–225 are interaction with KDM1B; the sequence is HFHHFLLSQT. Residues K227, K237, K240, and K269 each participate in a glycyl lysine isopeptide (Lys-Gly) (interchain with G-Cter in SUMO2) cross-link. Positions 261-553 are dehydrogenase domain; that stretch reads GSITPTDKKI…MSAVYRAYIH (293 aa). An NAD(+)-binding site is contributed by 271–285; it reads GFLGLGLMGSGIVSN. A Glycyl lysine isopeptide (Lys-Gly) (interchain with G-Cter in SUMO2) cross-link involves residue K302. Positions 362 and 505 each coordinate NAD(+). Residue S540 is modified to Phosphoserine.

The protein belongs to the HIBADH-related family. NP60 subfamily. In terms of assembly, homotetramere. Interacts with MAPK14. Interacts with KDM1B at nucleosomes; this interaction stimulates H3K4me1 and H3K4me2 demethylation. Binds to mononucleosomes. Interacts with GATA4; the interaction is required for a synergistic activation of GATA4 target genes transcription.

It localises to the nucleus. The protein resides in the chromosome. In terms of biological role, cytokine-like nuclear factor with chromatin gene reader activity involved in chromatin modification and regulation of gene expression. Acts as a nucleosome-destabilizing factor that is recruited to genes during transcriptional activation. Recognizes and binds histone H3 without a preference for specific epigenetic markers and also binds DNA. Interacts with KDM1B and promotes its histone demethylase activity by facilitating the capture of H3 tails, they form a multifunctional enzyme complex that modifies transcribed chromatin and facilitates Pol II transcription through nucleosomes. Stimulates the acetylation of 'Lys-56' of nucleosomal histone H3 (H3K56ac) by EP300. With GATA4, co-binds a defined set of heart development genes and coregulates their expression during cardiomyocyte differentiation. Regulates p38 MAP kinase activity by mediating stress activation of MAPK14/p38alpha and specifically regulating MAPK14 signaling. Indirectly promotes phosphorylation of MAPK14 and activation of ATF2. The phosphorylation of MAPK14 requires upstream activity of MAP2K4 and MAP2K6. The sequence is that of Cytokine-like nuclear factor N-PAC from Homo sapiens (Human).